A 264-amino-acid polypeptide reads, in one-letter code: N-carbamoylsarcosine amidase (264 aa).

The active-site Nucleophile is Cys177. The disordered stretch occupies residues 240–264 (TVPKTLSDPQPEVEAPADPVFAEQH).

Homotetramer. Requires sulfate as cofactor.

The enzyme catalyses N-carbamoylsarcosine + H2O + 2 H(+) = sarcosine + NH4(+) + CO2. It participates in amine and polyamine degradation; creatinine degradation; sarcosine from creatinine: step 3/3. The polypeptide is N-carbamoylsarcosine amidase (Arthrobacter sp).